A 431-amino-acid polypeptide reads, in one-letter code: MTLYHFVGIKGSGMSALAHILFDMGETVQGSDIEKEFFTEKSLREKGITILPFNQENIKEGMTIIAGNAFNDDHEEIVRAHELGLTVTRYHDFLGNFMSQYTSVAVTGSHGKTSTTGLLSHVMNGDKKTSYLIGDGTGMGMPGSEYFAFEACEYRRHFLSYSPDYAIITNIDFDHPDYFASMSDVFNAFQEMTKKVKKAIVACGDDENLRDIEADIPIYYYGFKEDNKVVAKNMKTTPQGTQFEVYIDGELFDTFVTPMYGDHQVLNALAVITICHLEGLDNAAVKHALSTFGGVKRRFSEKIQDEQILIDDYAHHPTEIKATLQSAHLKYPERKVIAIFQPHTFSRTSAFLEDFANSLKLADKVYLCDIFGSVREDSGELTIGDLQILIPGAELINESNVNLLKQYKDAVVIFMGAGDIQKIQVAYENLK.

Residue 108-114 coordinates ATP; it reads GSHGKTS.

This sequence belongs to the MurCDEF family.

It is found in the cytoplasm. The enzyme catalyses UDP-N-acetyl-alpha-D-muramate + L-alanine + ATP = UDP-N-acetyl-alpha-D-muramoyl-L-alanine + ADP + phosphate + H(+). The protein operates within cell wall biogenesis; peptidoglycan biosynthesis. Cell wall formation. In Macrococcus caseolyticus (strain JCSC5402) (Macrococcoides caseolyticum), this protein is UDP-N-acetylmuramate--L-alanine ligase.